Consider the following 350-residue polypeptide: 3-isopropylmalate dehydrogenase (350 aa).

76 to 87 (GPKWDNAPKRPE) contributes to the NAD(+) binding site. Positions 94, 104, 132, and 217 each coordinate substrate. Residues Asp217, Asp241, and Asp245 each coordinate Mg(2+). NAD(+) is bound at residue 275–287 (GSAPDIANQNIAN).

The protein belongs to the isocitrate and isopropylmalate dehydrogenases family. LeuB type 1 subfamily. As to quaternary structure, homodimer. Mg(2+) serves as cofactor. It depends on Mn(2+) as a cofactor.

It is found in the cytoplasm. It carries out the reaction (2R,3S)-3-isopropylmalate + NAD(+) = 4-methyl-2-oxopentanoate + CO2 + NADH. The protein operates within amino-acid biosynthesis; L-leucine biosynthesis; L-leucine from 3-methyl-2-oxobutanoate: step 3/4. In terms of biological role, catalyzes the oxidation of 3-carboxy-2-hydroxy-4-methylpentanoate (3-isopropylmalate) to 3-carboxy-4-methyl-2-oxopentanoate. The product decarboxylates to 4-methyl-2 oxopentanoate. This Listeria monocytogenes serovar 1/2a (strain ATCC BAA-679 / EGD-e) protein is 3-isopropylmalate dehydrogenase.